Reading from the N-terminus, the 221-residue chain is Serotriflin (221 aa).

An SCP domain is found at Leu-19 to Tyr-147. N-linked (GlcNAc...) asparagine glycosylation is present at Asn-48. Intrachain disulfides connect Cys-56–Cys-134, Cys-73–Cys-148, Cys-129–Cys-145, Cys-167–Cys-174, Cys-170–Cys-179, Cys-183–Cys-216, Cys-192–Cys-210, and Cys-201–Cys-214. Positions Cys-183–Cys-216 constitute a ShKT domain.

As to quaternary structure, forms a stable, non-covalent complex with SSP-2.

The protein localises to the secreted. In Protobothrops flavoviridis (Habu), this protein is Serotriflin.